Consider the following 118-residue polypeptide: UPF0102 protein RSal33209_1090 (118 aa).

The protein belongs to the UPF0102 family.

The polypeptide is UPF0102 protein RSal33209_1090 (Renibacterium salmoninarum (strain ATCC 33209 / DSM 20767 / JCM 11484 / NBRC 15589 / NCIMB 2235)).